The sequence spans 1068 residues: Self-sufficient cytochrome P450 monooxygenase CYP505U2 (1068 aa).

Residue C408 participates in heme binding. Residues 464–498 (TTAGMVPESVQSLRQAQKSGKPGNSKSSANESMVG) form a disordered region. Residues 472-498 (SVQSLRQAQKSGKPGNSKSSANESMVG) are compositionally biased toward polar residues. The Flavodoxin-like domain occupies 505–646 (VSIFYGSNSG…DLEKWEESIL (142 aa)). Residues 511-515 (SNSGS) and 590-622 (VFGC…QRVA) each bind FMN. The FAD-binding FR-type domain maps to 679 to 909 (KEFLEATVTS…RRSNPAFHPP (231 aa)).

The protein in the N-terminal section; belongs to the cytochrome P450 family. FAD serves as cofactor. Requires FMN as cofactor. The cofactor is heme.

The enzyme catalyses 2 oxidized [cytochrome P450] + NADPH = 2 reduced [cytochrome P450] + NADP(+) + H(+). It carries out the reaction an organic molecule + reduced [NADPH--hemoprotein reductase] + O2 = an alcohol + oxidized [NADPH--hemoprotein reductase] + H2O + H(+). It catalyses the reaction dodecanoate + reduced [NADPH--hemoprotein reductase] + O2 = 3-hydroxydodecanoate + oxidized [NADPH--hemoprotein reductase] + H2O + H(+). The catalysed reaction is dodecanoate + reduced [NADPH--hemoprotein reductase] + O2 = 7-hydroxydodecanoate + oxidized [NADPH--hemoprotein reductase] + H2O + H(+). The enzyme catalyses dodecan-1-ol + reduced [NADPH--hemoprotein reductase] + O2 = 1,4-dodecanediol + oxidized [NADPH--hemoprotein reductase] + H2O + H(+). It carries out the reaction dodecan-1-ol + reduced [NADPH--hemoprotein reductase] + O2 = 1,3-dodecanediol + oxidized [NADPH--hemoprotein reductase] + H2O + H(+). Functionally, self-sufficient cytochrome P450 monooxygenase that catalyzes the regioselective in-chain hydroxylation of alkanes, fatty alcohols, and fatty acids. Preferentially hydroxylates 1-dodecanol at C3 and C4 (positions omega-8 and omega-9). It is very likely that CYP505U2 prefers dodecanol, and probably other fatty alcohols, over fatty acids as substrates. Does not show any significant activity toward tetradecanoic acid. The chain is Self-sufficient cytochrome P450 monooxygenase CYP505U2 from Exserohilum turcicum (strain 28A) (Northern leaf blight fungus).